The sequence spans 412 residues: Multidrug resistance protein MdtA (412 aa).

An N-terminal signal peptide occupies residues 1-21 (MKGSNIRRWGAALAVVIIAGA). Disordered regions lie at residues 33–53 (GSGAPAAGQGPQGPGGARHGR) and 389–412 (VVTASSGEQAQPAPRQSGKHGARS).

The protein belongs to the membrane fusion protein (MFP) (TC 8.A.1) family. In terms of assembly, part of a tripartite efflux system composed of MdtA, MdtB and MdtC.

Its subcellular location is the cell inner membrane. This is Multidrug resistance protein MdtA from Klebsiella pneumoniae subsp. pneumoniae (strain ATCC 700721 / MGH 78578).